The chain runs to 84 residues: Putative membrane protein insertion efficiency factor (84 aa).

The segment at 63–84 (GEDPVPNHFTLRRNKKEKPSKS) is disordered.

This sequence belongs to the UPF0161 family.

Its subcellular location is the cell membrane. Its function is as follows. Could be involved in insertion of integral membrane proteins into the membrane. The sequence is that of Putative membrane protein insertion efficiency factor from Streptococcus mutans serotype c (strain ATCC 700610 / UA159).